The sequence spans 367 residues: Inner membrane amino-acid ABC transporter permease protein YhdY (367 aa).

Over 1-36 the chain is Cytoplasmic; the sequence is MTKVLLSHPPRPASHNSSRAMVWVRKNLFSSWSNSL. The helical transmembrane segment at 37–57 threads the bilayer; it reads LTIGCIWLMWELIPPLLNWAF. The Periplasmic portion of the chain corresponds to 58-99; it reads LQANWVGSTRADCTKAGACWVFIHERFGQFMYGLYPHDQRWR. The chain crosses the membrane as a helical span at residues 100 to 120; sequence INLALLIGLVSIAPMFWKILP. Residues 121 to 125 lie on the Cytoplasmic side of the membrane; that stretch reads HRGRY. Residues 126–146 form a helical membrane-spanning segment; that stretch reads IAAWAVIYPLIVWWLMYGGFF. Residues 147-162 are Periplasmic-facing; the sequence is ALERVETRQWGGLTLT. The ABC transmembrane type-1 domain maps to 159–353; it reads LTLTLIIASV…IFCFSMSRYS (195 aa). The helical transmembrane segment at 163 to 183 threads the bilayer; that stretch reads LIIASVGIAGALPWGILLALG. Residues 184–192 are Cytoplasmic-facing; it reads RRSHMPIVR. A helical membrane pass occupies residues 193–213; the sequence is ILSVIFIEFWRGVPLITVLFM. Residues 214–233 lie on the Periplasmic side of the membrane; it reads SSVMLPLFMAEGTSIDKLIR. A helical membrane pass occupies residues 234–254; that stretch reads ALVGVILFQSAYVAEVVRGGL. Over 255–291 the chain is Cytoplasmic; the sequence is QALPKGQYEAAESLALGYWKTQGLVILPQALKLVIPG. The chain crosses the membrane as a helical span at residues 292–312; it reads LVNTIIALFKDTSLVIIIGLF. Topologically, residues 313–326 are periplasmic; the sequence is DLFSSVQQATVDPA. A helical membrane pass occupies residues 327–347; it reads WLGMSTEGYVFAALIYWIFCF. Residues 348-367 are Cytoplasmic-facing; it reads SMSRYSQYLEKRFNTGRTPH.

It belongs to the binding-protein-dependent transport system permease family. HisMQ subfamily.

The protein resides in the cell inner membrane. In terms of biological role, probably part of the binding-protein-dependent transport system YdhWXYZ for an amino acid; probably responsible for the translocation of the substrate across the membrane. The protein is Inner membrane amino-acid ABC transporter permease protein YhdY (yhdY) of Escherichia coli (strain K12).